The primary structure comprises 208 residues: 3-isopropylmalate dehydratase small subunit (208 aa).

This sequence belongs to the LeuD family. LeuD type 1 subfamily. In terms of assembly, heterodimer of LeuC and LeuD.

The catalysed reaction is (2R,3S)-3-isopropylmalate = (2S)-2-isopropylmalate. It participates in amino-acid biosynthesis; L-leucine biosynthesis; L-leucine from 3-methyl-2-oxobutanoate: step 2/4. Catalyzes the isomerization between 2-isopropylmalate and 3-isopropylmalate, via the formation of 2-isopropylmaleate. This chain is 3-isopropylmalate dehydratase small subunit (leuD), found in Cupriavidus necator (Alcaligenes eutrophus).